A 254-amino-acid chain; its full sequence is 5'/3'-nucleotidase SurE (254 aa).

The a divalent metal cation site is built by Asp9, Asp10, Ser40, and Asn93.

This sequence belongs to the SurE nucleotidase family. A divalent metal cation serves as cofactor.

It localises to the cytoplasm. The enzyme catalyses a ribonucleoside 5'-phosphate + H2O = a ribonucleoside + phosphate. It catalyses the reaction a ribonucleoside 3'-phosphate + H2O = a ribonucleoside + phosphate. The catalysed reaction is [phosphate](n) + H2O = [phosphate](n-1) + phosphate + H(+). Functionally, nucleotidase with a broad substrate specificity as it can dephosphorylate various ribo- and deoxyribonucleoside 5'-monophosphates and ribonucleoside 3'-monophosphates with highest affinity to 3'-AMP. Also hydrolyzes polyphosphate (exopolyphosphatase activity) with the preference for short-chain-length substrates (P20-25). Might be involved in the regulation of dNTP and NTP pools, and in the turnover of 3'-mononucleotides produced by numerous intracellular RNases (T1, T2, and F) during the degradation of various RNAs. The sequence is that of 5'/3'-nucleotidase SurE from Proteus mirabilis (strain HI4320).